Here is a 368-residue protein sequence, read N- to C-terminus: GTPase Obg (368 aa).

Residues 1–161 enclose the Obg domain; the sequence is MRFVDEATIT…RSLRLELKIL (161 aa). The OBG-type G domain maps to 162–337; sequence ADAGLLGLPN…VVAEMWRMRD (176 aa). Residues 168-175, 193-197, 217-220, 290-293, and 318-320 contribute to the GTP site; these read GLPNAGKS, FTTLI, DIPG, NKID, and SAL. Mg(2+) is bound by residues Ser175 and Thr195.

The protein belongs to the TRAFAC class OBG-HflX-like GTPase superfamily. OBG GTPase family. As to quaternary structure, monomer. Requires Mg(2+) as cofactor.

It localises to the cytoplasm. Its function is as follows. An essential GTPase which binds GTP, GDP and possibly (p)ppGpp with moderate affinity, with high nucleotide exchange rates and a fairly low GTP hydrolysis rate. Plays a role in control of the cell cycle, stress response, ribosome biogenesis and in those bacteria that undergo differentiation, in morphogenesis control. This Nitratidesulfovibrio vulgaris (strain DSM 19637 / Miyazaki F) (Desulfovibrio vulgaris) protein is GTPase Obg.